A 140-amino-acid polypeptide reads, in one-letter code: Large ribosomal subunit protein uL11 (140 aa).

The protein belongs to the universal ribosomal protein uL11 family. As to quaternary structure, part of the ribosomal stalk of the 50S ribosomal subunit. Interacts with L10 and the large rRNA to form the base of the stalk. L10 forms an elongated spine to which L12 dimers bind in a sequential fashion forming a multimeric L10(L12)X complex. Post-translationally, one or more lysine residues are methylated.

Functionally, forms part of the ribosomal stalk which helps the ribosome interact with GTP-bound translation factors. The protein is Large ribosomal subunit protein uL11 of Staphylococcus saprophyticus subsp. saprophyticus (strain ATCC 15305 / DSM 20229 / NCIMB 8711 / NCTC 7292 / S-41).